The following is a 334-amino-acid chain: Chitinase 9 (334 aa).

Residues 1–23 (MKATTTAVALLVAAAAMAAQVVA) form the signal peptide. The 41-residue stretch at 24-64 (EQCGSQAGGALCPNCLCCSSYGWCGSTSDYCGDGCQSQCDG) folds into the Chitin-binding type-1 domain. Disulfide bonds link C26–C41, C35–C47, C38–C65, C40–C54, C58–C62, C107–C169, C181–C189, and C288–C320. Residue E151 is the Proton donor of the active site.

Belongs to the glycosyl hydrolase 19 family. Chitinase class I subfamily. Expressed at high levels in roots, sheaths and meristems.

It catalyses the reaction Random endo-hydrolysis of N-acetyl-beta-D-glucosaminide (1-&gt;4)-beta-linkages in chitin and chitodextrins.. May play a role in defense against fungal pathogens containing chitin. The sequence is that of Chitinase 9 (Cht9) from Oryza sativa subsp. japonica (Rice).